The following is a 904-amino-acid chain: Alanine--tRNA ligase (904 aa).

Zn(2+)-binding residues include His594, His598, Cys695, and His699.

The protein belongs to the class-II aminoacyl-tRNA synthetase family. Zn(2+) serves as cofactor.

It is found in the cytoplasm. The catalysed reaction is tRNA(Ala) + L-alanine + ATP = L-alanyl-tRNA(Ala) + AMP + diphosphate. Catalyzes the attachment of alanine to tRNA(Ala) in a two-step reaction: alanine is first activated by ATP to form Ala-AMP and then transferred to the acceptor end of tRNA(Ala). Also edits incorrectly charged Ser-tRNA(Ala) and Gly-tRNA(Ala) via its editing domain. The polypeptide is Alanine--tRNA ligase (Anaeromyxobacter sp. (strain Fw109-5)).